The following is a 201-amino-acid chain: Holliday junction branch migration complex subunit RuvA (201 aa).

Residues 1-63 (MIASVRGEVL…EDSMTLYGFA (63 aa)) are domain I. The domain II stretch occupies residues 64 to 142 (DTEARDLFGL…LVPVQAGPPG (79 aa)). The flexible linker stretch occupies residues 143–153 (STPAVAATPVR). The tract at residues 153-201 (REQVVEALTGLGFPLKQAEQALDTVLAEQPAADTSTALRAALSLLGKNR) is domain III.

This sequence belongs to the RuvA family. As to quaternary structure, homotetramer. Forms an RuvA(8)-RuvB(12)-Holliday junction (HJ) complex. HJ DNA is sandwiched between 2 RuvA tetramers; dsDNA enters through RuvA and exits via RuvB. An RuvB hexamer assembles on each DNA strand where it exits the tetramer. Each RuvB hexamer is contacted by two RuvA subunits (via domain III) on 2 adjacent RuvB subunits; this complex drives branch migration. In the full resolvosome a probable DNA-RuvA(4)-RuvB(12)-RuvC(2) complex forms which resolves the HJ.

Its subcellular location is the cytoplasm. The RuvA-RuvB-RuvC complex processes Holliday junction (HJ) DNA during genetic recombination and DNA repair, while the RuvA-RuvB complex plays an important role in the rescue of blocked DNA replication forks via replication fork reversal (RFR). RuvA specifically binds to HJ cruciform DNA, conferring on it an open structure. The RuvB hexamer acts as an ATP-dependent pump, pulling dsDNA into and through the RuvAB complex. HJ branch migration allows RuvC to scan DNA until it finds its consensus sequence, where it cleaves and resolves the cruciform DNA. This is Holliday junction branch migration complex subunit RuvA from Nocardia farcinica (strain IFM 10152).